A 447-amino-acid polypeptide reads, in one-letter code: Na(+)-translocating NADH-quinone reductase subunit A (447 aa).

It belongs to the NqrA family. Composed of six subunits; NqrA, NqrB, NqrC, NqrD, NqrE and NqrF.

The enzyme catalyses a ubiquinone + n Na(+)(in) + NADH + H(+) = a ubiquinol + n Na(+)(out) + NAD(+). NQR complex catalyzes the reduction of ubiquinone-1 to ubiquinol by two successive reactions, coupled with the transport of Na(+) ions from the cytoplasm to the periplasm. NqrA to NqrE are probably involved in the second step, the conversion of ubisemiquinone to ubiquinol. The sequence is that of Na(+)-translocating NADH-quinone reductase subunit A from Neisseria gonorrhoeae (strain NCCP11945).